The primary structure comprises 3075 residues: Probable polyketide synthase 30 (3075 aa).

Positions Ser-26–Glu-458 constitute a Ketosynthase family 3 (KS3) domain. Catalysis depends on for beta-ketoacyl synthase activity residues Cys-198, His-337, and His-381. The segment at Gly-663–Tyr-696 is acyl/malonyl transferase. The active-site For acyl/malonyl transferase activity is Ser-673. An N-terminal hotdog fold region spans residues Gly-963–Ser-1085. The region spanning Gly-963 to Pro-1269 is the PKS/mFAS DH domain. The active-site Proton acceptor; for dehydratase activity is the His-997. A C-terminal hotdog fold region spans residues Asn-1102–Pro-1269. Catalysis depends on Asp-1174, which acts as the Proton donor; for dehydratase activity. Residues Asp-2533 to His-2610 enclose the Carrier domain. Ser-2570 carries the O-(pantetheine 4'-phosphoryl)serine modification.

It depends on pantetheine 4'-phosphate as a cofactor.

Its function is as follows. Probable polyketide synthase. May be involved in the process of cell migration. The sequence is that of Probable polyketide synthase 30 (pks30) from Dictyostelium discoideum (Social amoeba).